The primary structure comprises 178 residues: UPF0098 protein PYRAB11530 (178 aa).

Positions 1–22 (MRYLVPLLVFMVLGMGCLGGGG) are cleaved as a signal peptide.

This sequence belongs to the UPF0098 family.

This chain is UPF0098 protein PYRAB11530, found in Pyrococcus abyssi (strain GE5 / Orsay).